A 1014-amino-acid polypeptide reads, in one-letter code: MICAL-like protein 2 (1014 aa).

The region spanning 1–107 is the Calponin-homology (CH) domain; that stretch reads MAAIKALQEW…YVSQYYNYFH (107 aa). Positions 1 to 261 are forms an intramolecular interaction with the C-terminal coiled coil domain keeping the protein in a closed conformation; the sequence is MAAIKALQEW…KLSNLASRQP (261 aa). 3 positions are modified to phosphoserine: Ser-110, Ser-144, and Ser-154. The tract at residues 114 to 181 is disordered; sequence GMAGMKRPSS…PSPKAAPGTV (68 aa). An LIM zinc-binding domain is found at 187 to 249; it reads SICGVCGKHV…THHSSEAVSV (63 aa). The residue at position 250 (Ser-250) is a Phosphoserine. Residues 262 to 394 are necessary and sufficient for interaction with actinins; sequence GGGIADTRPI…QGQAASKGVK (133 aa). The segment at 262 to 810 is mediates targeting to the cell plasma membrane; it reads GGGIADTRPI…QDDQTRSCKE (549 aa). Disordered stretches follow at residues 311–450 and 609–780; these read LTPP…SRVP and TLPK…RRKK. Polar residues predominate over residues 332-355; that stretch reads STVTTTSANSKATTHVTNSSPVGW. A compositionally biased stretch (low complexity) spans 356 to 368; the sequence is SSSAQSSTGTSGS. The segment covering 384 to 398 has biased composition (polar residues); that stretch reads PQGQAASKGVKTQLN. 2 stretches are compositionally biased toward low complexity: residues 399–419 and 438–447; these read SSTDSSSTAPTPAWTSSSSRT and PASSSSSHAS. Composition is skewed to polar residues over residues 624–633 and 646–656; these read LSHSTTQAFS and VGSTSWTSVSL. Composition is skewed to basic and acidic residues over residues 701–711 and 720–737; these read EGWRARLKPVD and LEQKEPVLAEPRAGDTPR. Polar residues predominate over residues 747–758; sequence IHITLTPIQQKR. Thr-759 is subject to Phosphothreonine. Residues Ser-773 and Ser-837 each carry the phosphoserine modification. The tract at residues 811-918 is forms an intramolecular interaction with the N-terminal Calponin-homology and LIM zinc-binding domains-containing region keeping the protein in a closed conformation; it reads KTATWGTRES…LMYKSKDQCL (108 aa). In terms of domain architecture, bMERB spans 838–985; it reads PVRLHPNYIS…EQEEDQMLES (148 aa). Residues 845-885 adopt a coiled-coil conformation; that stretch reads YISQEELQRQLQDIERQLDALELRGVELEKRLRAAEGDASE. Positions 918–1014 are mediates interaction with RAB13 and is required for transition from the closed to the open conformation; sequence LEERQLDLQG…WSSKSKSGQT (97 aa).

In terms of assembly, interacts with RAB13 (GTP-bound form); competes with RAB8A and is involved in tight junctions assembly. Interacts with RAB8A; competes with RAB13 and is involved in E-cadherin endocytic recycling. Interacts with RAB8B. Interacts (preferentially in opened conformation) with ACTN1 and ACTN4; stimulated by RAB13 activation. Interacts (via calponin-homology (CH) domain) with the filamins FLNA, FLNB and FLNC (via actin-binding domain).

It is found in the cell membrane. Its subcellular location is the cell junction. It localises to the tight junction. The protein localises to the recycling endosome. The protein resides in the cell projection. It is found in the neuron projection. Its subcellular location is the cytoplasm. It localises to the cytoskeleton. Functionally, effector of small Rab GTPases which is involved in junctional complexes assembly through the regulation of cell adhesion molecules transport to the plasma membrane and actin cytoskeleton reorganization. Regulates the endocytic recycling of occludins, claudins and E-cadherin to the plasma membrane and may thereby regulate the establishment of tight junctions and adherens junctions. In parallel, may regulate actin cytoskeleton reorganization directly through interaction with F-actin or indirectly through actinins and filamins. Most probably involved in the processes of epithelial cell differentiation, cell spreading and neurite outgrowth. Undergoes liquid-liquid phase separation to form tubular recycling endosomes. Plays 2 sequential roles in the biogenesis of tubular recycling endosomes: first organizes phase separation and then the closed form formed by interaction with RAB8A promotes endosomal tubulation. This Rattus norvegicus (Rat) protein is MICAL-like protein 2 (Micall2).